Here is a 914-residue protein sequence, read N- to C-terminus: Solute carrier family 12 member 9 (914 aa).

The Cytoplasmic segment spans residues 1 to 36; it reads MASESSPLLAYRLLGEEGAAFPPNGAGVSGVPSSRK. S6 bears the Phosphoserine mark. A helical transmembrane segment spans residues 37-57; sequence LSTFLGVVVPTVLSMFSIVVF. The Extracellular segment spans residues 58–72; sequence LRIGFVVGHAGLLQA. The chain crosses the membrane as a helical span at residues 73-93; sequence LAMLLVAYIILALTVLSVCAI. Over 94 to 119 the chain is Cytoplasmic; that stretch reads ATNGAVRGGGAYFMISRTLGPEVGGS. Residues 120–140 form a helical membrane-spanning segment; it reads IGLMFYLANVCGCAVSLLGLV. At 141–167 the chain is on the extracellular side; that stretch reads ESILDVFGADATGSSGIQVLPQGYGWN. The helical transmembrane segment at 168–188 threads the bilayer; it reads LLYGSLLLGLVGGVCTLGAGL. Over 189-193 the chain is Cytoplasmic; that stretch reads YARAS. Residues 194-214 traverse the membrane as a helical segment; sequence FLTFLLVSGSLASVLVSFVAV. Over 215–262 the chain is Extracellular; sequence GPRNIPLAPRPGTNASSVPHRHGHFTGFNGSTLRDNLGAGYAEDYTTG. N228 and N243 each carry an N-linked (GlcNAc...) asparagine glycan. A helical transmembrane segment spans residues 263–283; sequence AMMTFASVFAVLFNGCTGIMA. The Cytoplasmic segment spans residues 284–297; that stretch reads GANMSGELKDPSRA. A helical transmembrane segment spans residues 298–318; that stretch reads IPLGTIIAVAYTFFIYILLFF. Residues 319–338 lie on the Extracellular side of the membrane; it reads LSSFTCDRALLQEDYGFFRD. A helical transmembrane segment spans residues 339–359; the sequence is ISLWPPLVLIGIYATALSASM. Residues 360-376 lie on the Cytoplasmic side of the membrane; it reads SSLIGASRILHALAQDD. The chain crosses the membrane as a helical span at residues 377–399; sequence LFGVILAPAKVVSGGGNPWGAVL. At 400–416 the chain is on the extracellular side; it reads YSWGLVQLVLLAGKLNT. The chain crosses the membrane as a helical span at residues 417 to 437; it reads LAAVVTVFYLVAYAAVDLSCL. The Cytoplasmic portion of the chain corresponds to 438-466; sequence SLEWASAPNFRPTFSLFSWHTCLLGVASC. The chain crosses the membrane as a helical span at residues 467-487; the sequence is LLMMFLISPGAAGGSLLLMGL. Residues 488 to 740 lie on the Extracellular side of the membrane; the sequence is LSALLTARGG…LLRPRGGPGY (253 aa). A disordered region spans residues 645–678; the sequence is PAFSEPAEGTREGGSPALSTLFPPPRAPGSPRAL. The chain crosses the membrane as a helical span at residues 741 to 761; sequence VDVCGLFLLQMATILSMVPAW. Residues 762 to 914 lie on the Cytoplasmic side of the membrane; the sequence is HSARLRIFLC…GVTPVTCTDL (153 aa). A disordered region spans residues 844–864; that stretch reads QGRGTVGGPGGPEGRDGEEGP.

This sequence belongs to the SLC12A transporter family. Interacts with SLC12A1.

It is found in the cell membrane. Its subcellular location is the lysosome membrane. In terms of biological role, may be an inhibitor of SLC12A1. Seems to correspond to a subunit of a multimeric transport system and thus, additional subunits may be required for its function. May play a role in lysosomal ion flux and osmoregulation. The protein is Solute carrier family 12 member 9 (Slc12a9) of Mus musculus (Mouse).